We begin with the raw amino-acid sequence, 123 residues long: Protein Wnt-7(I) (123 aa).

A lipid anchor (O-palmitoleoyl serine; by PORCN) is attached at Ser-1. Cys-89 and Cys-104 are oxidised to a cystine. An N-linked (GlcNAc...) asparagine glycan is attached at Asn-90. Positions 121 to 123 (CKF) match the Microbody targeting signal motif.

It belongs to the Wnt family. In terms of processing, palmitoleoylation is required for efficient binding to frizzled receptors. Depalmitoleoylation leads to Wnt signaling pathway inhibition.

Its subcellular location is the secreted. It is found in the extracellular space. It localises to the extracellular matrix. Its function is as follows. Ligand for members of the frizzled family of seven transmembrane receptors. Probable developmental protein. May be a signaling molecule which affects the development of discrete regions of tissues. Is likely to signal over only few cell diameters. The protein is Protein Wnt-7(I) (WNT-7(I)) of Eptatretus stoutii (Pacific hagfish).